Here is a 187-residue protein sequence, read N- to C-terminus: Signal peptidase I U (187 aa).

Residues 1 to 16 are Cytoplasmic-facing; it reads MNAKTITLKKKRKIKT. Residues 17 to 37 traverse the membrane as a helical segment; the sequence is IVVLSIIMIAALIFTIRLVFY. Over 38–187 the chain is Extracellular; the sequence is KPFLIEGSSM…YPFGEMRQAK (150 aa). Active-site residues include serine 46 and lysine 88.

The protein belongs to the peptidase S26 family.

The protein localises to the cell membrane. It carries out the reaction Cleavage of hydrophobic, N-terminal signal or leader sequences from secreted and periplasmic proteins.. The polypeptide is Signal peptidase I U (sipU) (Bacillus subtilis (strain 168)).